Consider the following 135-residue polypeptide: Ribosome-binding factor A (135 aa).

It belongs to the RbfA family. Monomer. Binds 30S ribosomal subunits, but not 50S ribosomal subunits or 70S ribosomes.

It is found in the cytoplasm. In terms of biological role, one of several proteins that assist in the late maturation steps of the functional core of the 30S ribosomal subunit. Associates with free 30S ribosomal subunits (but not with 30S subunits that are part of 70S ribosomes or polysomes). Required for efficient processing of 16S rRNA. May interact with the 5'-terminal helix region of 16S rRNA. The polypeptide is Ribosome-binding factor A (Aliivibrio salmonicida (strain LFI1238) (Vibrio salmonicida (strain LFI1238))).